The primary structure comprises 436 residues: GTPase Der (436 aa).

2 EngA-type G domains span residues 4-167 and 176-351; these read PVVA…PKDH and IKFC…DNHA. Residues 10–17, 57–61, 119–122, 182–189, 229–233, and 294–297 each bind GTP; these read GRPNVGKS, DTGGI, NKID, DTAGM, and NKWD. One can recognise a KH-like domain in the interval 352-436; it reads MRVQTNVLNE…PIKIIARPRK (85 aa).

The protein belongs to the TRAFAC class TrmE-Era-EngA-EngB-Septin-like GTPase superfamily. EngA (Der) GTPase family. In terms of assembly, associates with the 50S ribosomal subunit.

In terms of biological role, GTPase that plays an essential role in the late steps of ribosome biogenesis. The chain is GTPase Der from Geobacillus thermodenitrificans (strain NG80-2).